We begin with the raw amino-acid sequence, 125 residues long: Actin, alpha skeletal muscle (125 aa).

Belongs to the actin family. As to quaternary structure, polymerization of globular actin (G-actin) leads to a structural filament (F-actin) in the form of a two-stranded helix. Each actin can bind to 4 others. Post-translationally, methylated at His-75 by SETD3.

Its subcellular location is the cytoplasm. It localises to the cytoskeleton. Actins are highly conserved proteins that are involved in various types of cell motility and are ubiquitously expressed in all eukaryotic cells. The sequence is that of Actin, alpha skeletal muscle from Pleurodeles waltl (Iberian ribbed newt).